Consider the following 125-residue polypeptide: Small ribosomal subunit protein uS13 (125 aa).

The interval 93 to 125 (RKGLPVRGQRTKTNARTRKGPKRTVAGKKKAGR) is disordered.

Belongs to the universal ribosomal protein uS13 family. Part of the 30S ribosomal subunit. Forms a loose heterodimer with protein S19. Forms two bridges to the 50S subunit in the 70S ribosome.

In terms of biological role, located at the top of the head of the 30S subunit, it contacts several helices of the 16S rRNA. In the 70S ribosome it contacts the 23S rRNA (bridge B1a) and protein L5 of the 50S subunit (bridge B1b), connecting the 2 subunits; these bridges are implicated in subunit movement. Contacts the tRNAs in the A and P-sites. This chain is Small ribosomal subunit protein uS13, found in Arthrobacter sp. (strain FB24).